The sequence spans 273 residues: uncharacterized protein (273 aa).

A compositionally biased stretch (basic residues) spans 1 to 10; sequence MSSKKVKYNP. 2 disordered regions span residues 1-32 and 50-124; these read MSSK…FGFN and EDVE…QSSP. Polar residues-rich tracts occupy residues 12–24, 55–64, and 92–124; these read KSAS…SASA, QSFNGKSSNL, and PQSS…QSSP. At S123 the chain carries Phosphoserine.

It localises to the nucleus. The protein resides in the cytoplasm. It is found in the cytoskeleton. Its subcellular location is the spindle. This is an uncharacterized protein from Schizosaccharomyces pombe (strain 972 / ATCC 24843) (Fission yeast).